The primary structure comprises 212 residues: Thiamine-phosphate synthase (212 aa).

Residues 40–44 (QFREK) and N75 contribute to the 4-amino-2-methyl-5-(diphosphooxymethyl)pyrimidine site. Residues D76 and D95 each coordinate Mg(2+). S113 is a binding site for 4-amino-2-methyl-5-(diphosphooxymethyl)pyrimidine. Position 139 to 141 (139 to 141 (TSS)) interacts with 2-[(2R,5Z)-2-carboxy-4-methylthiazol-5(2H)-ylidene]ethyl phosphate. Position 142 (K142) interacts with 4-amino-2-methyl-5-(diphosphooxymethyl)pyrimidine. 2-[(2R,5Z)-2-carboxy-4-methylthiazol-5(2H)-ylidene]ethyl phosphate is bound by residues G171 and 191 to 192 (IS).

It belongs to the thiamine-phosphate synthase family. The cofactor is Mg(2+).

It carries out the reaction 2-[(2R,5Z)-2-carboxy-4-methylthiazol-5(2H)-ylidene]ethyl phosphate + 4-amino-2-methyl-5-(diphosphooxymethyl)pyrimidine + 2 H(+) = thiamine phosphate + CO2 + diphosphate. The enzyme catalyses 2-(2-carboxy-4-methylthiazol-5-yl)ethyl phosphate + 4-amino-2-methyl-5-(diphosphooxymethyl)pyrimidine + 2 H(+) = thiamine phosphate + CO2 + diphosphate. It catalyses the reaction 4-methyl-5-(2-phosphooxyethyl)-thiazole + 4-amino-2-methyl-5-(diphosphooxymethyl)pyrimidine + H(+) = thiamine phosphate + diphosphate. The protein operates within cofactor biosynthesis; thiamine diphosphate biosynthesis; thiamine phosphate from 4-amino-2-methyl-5-diphosphomethylpyrimidine and 4-methyl-5-(2-phosphoethyl)-thiazole: step 1/1. Condenses 4-methyl-5-(beta-hydroxyethyl)thiazole monophosphate (THZ-P) and 2-methyl-4-amino-5-hydroxymethyl pyrimidine pyrophosphate (HMP-PP) to form thiamine monophosphate (TMP). This is Thiamine-phosphate synthase from Staphylococcus epidermidis (strain ATCC 35984 / DSM 28319 / BCRC 17069 / CCUG 31568 / BM 3577 / RP62A).